Here is a 175-residue protein sequence, read N- to C-terminus: Translation initiation factor IF-3 (175 aa).

The protein belongs to the IF-3 family. As to quaternary structure, monomer.

It localises to the cytoplasm. Functionally, IF-3 binds to the 30S ribosomal subunit and shifts the equilibrium between 70S ribosomes and their 50S and 30S subunits in favor of the free subunits, thus enhancing the availability of 30S subunits on which protein synthesis initiation begins. In Staphylococcus aureus (strain USA300), this protein is Translation initiation factor IF-3.